We begin with the raw amino-acid sequence, 329 residues long: Biotin synthase (329 aa).

The 225-residue stretch at 38-262 (NTIQVSTLLS…IMPYSYIRLS (225 aa)) folds into the Radical SAM core domain. Cys-53, Cys-57, and Cys-60 together coordinate [4Fe-4S] cluster. [2Fe-2S] cluster contacts are provided by Cys-97, Cys-128, Cys-188, and Arg-260.

This sequence belongs to the radical SAM superfamily. Biotin synthase family. Homodimer. Requires [4Fe-4S] cluster as cofactor. It depends on [2Fe-2S] cluster as a cofactor.

It catalyses the reaction (4R,5S)-dethiobiotin + (sulfur carrier)-SH + 2 reduced [2Fe-2S]-[ferredoxin] + 2 S-adenosyl-L-methionine = (sulfur carrier)-H + biotin + 2 5'-deoxyadenosine + 2 L-methionine + 2 oxidized [2Fe-2S]-[ferredoxin]. Its pathway is cofactor biosynthesis; biotin biosynthesis; biotin from 7,8-diaminononanoate: step 2/2. Functionally, catalyzes the conversion of dethiobiotin (DTB) to biotin by the insertion of a sulfur atom into dethiobiotin via a radical-based mechanism. The polypeptide is Biotin synthase (Acinetobacter baylyi (strain ATCC 33305 / BD413 / ADP1)).